The chain runs to 655 residues: Very long-chain specific acyl-CoA dehydrogenase, mitochondrial (655 aa).

The transit peptide at 1–40 directs the protein to the mitochondrion; it reads MQSARMTPSVGRQLLRLGARSSRSAALQGQPRPTSAQRLY. Positions 1–70 are disordered; that stretch reads MQSARMTPSV…TREKPARAES (70 aa). A compositionally biased stretch (polar residues) spans 21–37; sequence SSRSAALQGQPRPTSAQ. Positions 41–482 are catalytic; that stretch reads ASEATQAVLE…ALQGCMDKGK (442 aa). Lys-51 carries the post-translational modification N6-acetyllysine. Positions 60-70 are enriched in basic and acidic residues; that stretch reads STREKPARAES. An N6-acetyllysine; alternate mark is found at Lys-71 and Lys-127. Residues Lys-71 and Lys-127 each carry the N6-succinyllysine; alternate modification. The residue at position 195 (Lys-195) is an N6-succinyllysine. Residue 214–223 coordinates FAD; the sequence is FCLTEPSSGS. Cys-237 is subject to S-nitrosocysteine. Lys-239 is subject to N6-acetyllysine; alternate. Residue Lys-239 is modified to N6-succinyllysine; alternate. 249-251 is an FAD binding site; the sequence is WIS. Lys-268 bears the N6-succinyllysine mark. Lys-276 and Lys-278 each carry N6-acetyllysine; alternate. Residues Lys-276 and Lys-278 each carry the N6-succinyllysine; alternate modification. Residues Lys-298 and Lys-316 each carry the N6-acetyllysine modification. Lys-331 is subject to N6-acetyllysine; alternate. N6-succinyllysine; alternate is present on Lys-331. An N6-succinyllysine modification is found at Lys-372. 461–463 is a binding site for substrate; sequence FEG. Glu-462 functions as the Proton acceptor in the catalytic mechanism. FAD is bound at residue 464 to 466; it reads TND. Lys-482 bears the N6-acetyllysine; alternate mark. At Lys-482 the chain carries N6-succinyllysine; alternate. A membrane-anchoring region spans residues 483-516; that stretch reads ELTGLGNALKNPLGNVGLLIGEASKQLRRRTGIG. Phosphoserine occurs at positions 517 and 522. Lys-550 carries the N6-acetyllysine modification. Lys-556 is modified (N6-acetyllysine; alternate). At Lys-556 the chain carries N6-succinyllysine; alternate. Gln-562 is an FAD binding site. Lys-639 bears the N6-succinyllysine mark.

Belongs to the acyl-CoA dehydrogenase family. As to quaternary structure, homodimer. Homodimerizes after import into the mitochondrion. FAD serves as cofactor. Post-translationally, S-nitrosylation at Cys-237 in liver improves catalytic efficiency. As to expression, widely expressed (at protein level).

Its subcellular location is the mitochondrion inner membrane. The enzyme catalyses a very-long-chain 2,3-saturated fatty acyl-CoA + oxidized [electron-transfer flavoprotein] + H(+) = a very-long-chain (2E)-enoyl-CoA + reduced [electron-transfer flavoprotein]. It carries out the reaction dodecanoyl-CoA + oxidized [electron-transfer flavoprotein] + H(+) = (2E)-dodecenoyl-CoA + reduced [electron-transfer flavoprotein]. The catalysed reaction is tetradecanoyl-CoA + oxidized [electron-transfer flavoprotein] + H(+) = (2E)-tetradecenoyl-CoA + reduced [electron-transfer flavoprotein]. It catalyses the reaction oxidized [electron-transfer flavoprotein] + hexadecanoyl-CoA + H(+) = (2E)-hexadecenoyl-CoA + reduced [electron-transfer flavoprotein]. The enzyme catalyses octadecanoyl-CoA + oxidized [electron-transfer flavoprotein] + H(+) = (2E)-octadecenoyl-CoA + reduced [electron-transfer flavoprotein]. It carries out the reaction eicosanoyl-CoA + oxidized [electron-transfer flavoprotein] + H(+) = (2E)-eicosenoyl-CoA + reduced [electron-transfer flavoprotein]. The catalysed reaction is docosanoyl-CoA + oxidized [electron-transfer flavoprotein] + H(+) = (2E)-docosenoyl-CoA + reduced [electron-transfer flavoprotein]. It catalyses the reaction tetracosanoyl-CoA + oxidized [electron-transfer flavoprotein] + H(+) = (2E)-tetracosenoyl-CoA + reduced [electron-transfer flavoprotein]. It participates in lipid metabolism; mitochondrial fatty acid beta-oxidation. In terms of biological role, very long-chain specific acyl-CoA dehydrogenase is one of the acyl-CoA dehydrogenases that catalyze the first step of mitochondrial fatty acid beta-oxidation, an aerobic process breaking down fatty acids into acetyl-CoA and allowing the production of energy from fats. The first step of fatty acid beta-oxidation consists in the removal of one hydrogen from C-2 and C-3 of the straight-chain fatty acyl-CoA thioester, resulting in the formation of trans-2-enoyl-CoA. Among the different mitochondrial acyl-CoA dehydrogenases, very long-chain specific acyl-CoA dehydrogenase acts specifically on acyl-CoAs with saturated 12 to 24 carbons long primary chains. This is Very long-chain specific acyl-CoA dehydrogenase, mitochondrial from Rattus norvegicus (Rat).